A 565-amino-acid polypeptide reads, in one-letter code: Protein nucleotidyltransferase YdiU (565 aa).

The ATP site is built by G118, G120, R121, K141, D153, G154, R211, and R218. D290 serves as the catalytic Proton acceptor. Residues N291 and D300 each coordinate Mg(2+). Residue D300 participates in ATP binding.

The protein belongs to the SELO family. Mg(2+) serves as cofactor. It depends on Mn(2+) as a cofactor.

It carries out the reaction L-seryl-[protein] + ATP = 3-O-(5'-adenylyl)-L-seryl-[protein] + diphosphate. The catalysed reaction is L-threonyl-[protein] + ATP = 3-O-(5'-adenylyl)-L-threonyl-[protein] + diphosphate. The enzyme catalyses L-tyrosyl-[protein] + ATP = O-(5'-adenylyl)-L-tyrosyl-[protein] + diphosphate. It catalyses the reaction L-histidyl-[protein] + UTP = N(tele)-(5'-uridylyl)-L-histidyl-[protein] + diphosphate. It carries out the reaction L-seryl-[protein] + UTP = O-(5'-uridylyl)-L-seryl-[protein] + diphosphate. The catalysed reaction is L-tyrosyl-[protein] + UTP = O-(5'-uridylyl)-L-tyrosyl-[protein] + diphosphate. Its function is as follows. Nucleotidyltransferase involved in the post-translational modification of proteins. It can catalyze the addition of adenosine monophosphate (AMP) or uridine monophosphate (UMP) to a protein, resulting in modifications known as AMPylation and UMPylation. In Nitrosospira multiformis (strain ATCC 25196 / NCIMB 11849 / C 71), this protein is Protein nucleotidyltransferase YdiU.